A 450-amino-acid polypeptide reads, in one-letter code: MGHGVSCARTGDEHDFFRAAQLGDLDALAALLAADPSLARRATLYDRLSVLHIAAANGRIEVLSMFLDRGAPPDAVNRHKQTPLMLAAMHGKIDCVLKLLQADANILMFDSVHARTCLHHAAYYGHVDCLQAILAAAQTTPVADSWGFARFVNVRDDHGATPLHLAARQGRPGCVQVLLENGAIVSALTGSYGFPGSTSLHLAARSGNLDCIRKLLAWGADRLQRDSAGRIPYSVALKRNHGACAALLNPTSAEPMVWPSPLKFISELEPEAKALLEAALMEANREREKKILNGTKYSLPSPSPGDDSADDDACSEVSDTELCCICFDQACTIEVQDCGHQMCAPCTLALCCHNKPNPTTLTPPSPACPFCRGSISRLVVAQTRSACDPDKPSSLQLTRKRSRRSHNLSEGSSSFKGLPSAMGSFSKLGRGSSRMADSDSSNLDKPEHDL.

ANK repeat units lie at residues G11–R40, D46–A75, H79–M108, H113–V142, H158–A187, and P195–R225. The segment at I291 to D312 is disordered. The RING-type zinc finger occupies C323 to R372. Residues S385 to L450 form a disordered region.

In terms of assembly, interacts (via ankyrin repeats) with XA21. Post-translationally, phosphorylated by XA21.

The enzyme catalyses S-ubiquitinyl-[E2 ubiquitin-conjugating enzyme]-L-cysteine + [acceptor protein]-L-lysine = [E2 ubiquitin-conjugating enzyme]-L-cysteine + N(6)-ubiquitinyl-[acceptor protein]-L-lysine.. Its pathway is protein modification; protein ubiquitination. In terms of biological role, E3 ubiquitin-protein ligase required for full accumulation of the LRR receptor kinase XA21 and XA21-mediated disease resistance. Binding to XA21 may stabilize the receptor kinase and maintain its protein level. Autoubiquitinated in vitro. This Oryza sativa subsp. japonica (Rice) protein is E3 ubiquitin-protein ligase XB3 (XB3).